A 391-amino-acid polypeptide reads, in one-letter code: Succinate--CoA ligase [GDP-forming] subunit beta, mitochondrial (391 aa).

An ATP-grasp domain is found at 5–233 (KKIMADHGVT…NAEFRQKEIF (229 aa)). Residues Gln16, 49 to 51 (GRG), and Leu105 each bind GTP. Residues Asn202 and Asp216 each contribute to the Mg(2+) site. Residues Asn267 and 324–326 (GIV) each bind substrate.

The protein belongs to the succinate/malate CoA ligase beta subunit family. GTP-specific subunit beta subfamily. In terms of assembly, heterodimer of an alpha and a beta subunit. The beta subunit determines specificity for GTP. Mg(2+) serves as cofactor. Widely expressed. Not present in breast muscle.

Its subcellular location is the mitochondrion. It carries out the reaction GTP + succinate + CoA = succinyl-CoA + GDP + phosphate. Its pathway is carbohydrate metabolism; tricarboxylic acid cycle; succinate from succinyl-CoA (ligase route): step 1/1. Functionally, GTP-specific succinyl-CoA synthetase functions in the citric acid cycle (TCA), coupling the hydrolysis of succinyl-CoA to the synthesis of GTP and thus represents the only step of substrate-level phosphorylation in the TCA. The beta subunit provides nucleotide specificity of the enzyme and binds the substrate succinate, while the binding sites for coenzyme A and phosphate are found in the alpha subunit. This is Succinate--CoA ligase [GDP-forming] subunit beta, mitochondrial from Columba livia (Rock dove).